The chain runs to 656 residues: Vacuolar amino acid transporter 3 (656 aa).

The tract at residues 1–109 is disordered; sequence MSNSQSIKIK…VPSTSEDPDV (109 aa). Positions 15–28 are enriched in polar residues; sequence NENFASGSYSSRRS. Serine 37 and serine 53 each carry phosphoserine. A compositionally biased stretch (polar residues) spans 50–71; it reads ISPSESNLPNNVAENTTDTPVN. Positions 75 to 97 are enriched in basic and acidic residues; it reads IRDENHNSRKGKDVTLNSDEAHS. Serine 172 is modified (phosphoserine). The next 11 membrane-spanning stretches (helical) occupy residues 280–300, 307–327, 351–371, 389–409, 419–439, 457–477, 494–514, 537–557, 578–598, 601–621, and 636–656; these read AVLL…PKAF, FSSA…LLLI, FAIL…YISF, EYHL…LSLV, ALIA…WDVI, FSLF…ILPI, VMAA…AAFG, LYAI…IAII, YLRV…SSRL, FVSM…PPML, and DIFM…MTFF.

It belongs to the amino acid/polyamine transporter 2 family.

The protein resides in the endoplasmic reticulum membrane. It localises to the vacuole membrane. In terms of biological role, involved in amino acid efflux from the vacuole to the cytoplasm. Capable of transporting large neutral amino acids including tyrosine, glutamine, asparagine, isoleucine and leucine. Required for spore formation. The sequence is that of Vacuolar amino acid transporter 3 (avt3) from Schizosaccharomyces pombe (strain 972 / ATCC 24843) (Fission yeast).